The sequence spans 316 residues: Ferrochelatase (316 aa).

Fe cation contacts are provided by histidine 186 and glutamate 268.

The protein belongs to the ferrochelatase family.

It is found in the cytoplasm. The enzyme catalyses heme b + 2 H(+) = protoporphyrin IX + Fe(2+). The protein operates within porphyrin-containing compound metabolism; protoheme biosynthesis; protoheme from protoporphyrin-IX: step 1/1. Functionally, catalyzes the ferrous insertion into protoporphyrin IX. This Deinococcus radiodurans (strain ATCC 13939 / DSM 20539 / JCM 16871 / CCUG 27074 / LMG 4051 / NBRC 15346 / NCIMB 9279 / VKM B-1422 / R1) protein is Ferrochelatase.